Reading from the N-terminus, the 377-residue chain is Phytanoyl-CoA hydroxylase-interacting protein-like (377 aa).

The Fibronectin type-III domain occupies 52–161; it reads VPQNIKISNI…EINEFCTADY (110 aa).

It belongs to the PHYHIP family.

May play a role in the development of the central system. The sequence is that of Phytanoyl-CoA hydroxylase-interacting protein-like (phyhipl) from Danio rerio (Zebrafish).